Consider the following 54-residue polypeptide: UPF0391 membrane protein Bpet1858 (54 aa).

A run of 2 helical transmembrane segments spans residues 5–25 (AVVF…GIAA) and 27–47 (AAGI…LSIL).

It belongs to the UPF0391 family.

The protein localises to the cell membrane. The protein is UPF0391 membrane protein Bpet1858 of Bordetella petrii (strain ATCC BAA-461 / DSM 12804 / CCUG 43448).